A 339-amino-acid chain; its full sequence is Phytoene synthase (339 aa).

The protein belongs to the phytoene/squalene synthase family. ATP is required as a cofactor. Requires Mn(2+) as cofactor. It depends on Mg(2+) as a cofactor.

It participates in carotenoid biosynthesis; phytoene biosynthesis. Functionally, involved in the biosynthesis of carotenoids. Catalyzes the condensation of two molecules of geranylgeranyl diphosphate (GGPP) to give prephytoene diphosphate (PPPP) and the subsequent rearrangement of the cyclopropylcarbinyl intermediate to yield phytoene. This chain is Phytoene synthase (crtB), found in Rhodobacter capsulatus (strain ATCC BAA-309 / NBRC 16581 / SB1003).